Here is a 607-residue protein sequence, read N- to C-terminus: Developmental gene 1062 protein (607 aa).

3 disordered regions span residues L62–Q84, I334–Q451, and D568–L602. The span at I334 to S363 shows a compositional bias: low complexity. Positions S364–S382 are enriched in acidic residues. Composition is skewed to low complexity over residues I383–Q451 and D568–N582.

The protein is Developmental gene 1062 protein (DG1062) of Dictyostelium discoideum (Social amoeba).